The following is a 370-amino-acid chain: Mitogen-activated protein kinase 3 (370 aa).

Residues 38–324 enclose the Protein kinase domain; the sequence is RPPIIPIGRG…VEQALNHQYL (287 aa). ATP contacts are provided by residues 44-52 and K67; that span reads IGRGAYGIV. The active-site Proton acceptor is the D164. T196 carries the phosphothreonine modification. The TXY signature appears at 196–198; it reads TEY. At Y198 the chain carries Phosphotyrosine. T201 carries the post-translational modification Phosphothreonine.

This sequence belongs to the protein kinase superfamily. CMGC Ser/Thr protein kinase family. MAP kinase subfamily. Interacts with DSPTP1B/MKP2, NDPK2 and VIP1. The interaction with DSPTP1B/MKP2 is repressed by fungal elicitation. Binds to LIP5. Interacts with VQ4. Interacts with RACK1A, RACK1B and RACK1C. Interacts with FLZ9. Interacts with MKK5. Dually phosphorylated on Thr-196 and Tyr-198, which activates the enzyme. Dephosphorylated by DSPTP1B/MKP2.

The protein localises to the cytoplasm. The protein resides in the nucleus. It is found in the cell cortex. The catalysed reaction is L-seryl-[protein] + ATP = O-phospho-L-seryl-[protein] + ADP + H(+). It carries out the reaction L-threonyl-[protein] + ATP = O-phospho-L-threonyl-[protein] + ADP + H(+). With respect to regulation, activated by threonine and tyrosine phosphorylation. Activated by MAP kinase kinases MKK4, MKK5, MKK7 and MKK9. Activated in response to hydrogen peroxide, ozone, salt stress and flagellin bacterial elicitor. Triggered by Agrobacterium upon T-DNA transfer. Repressed by DSPTP1B/MKP2-mediated dephosphorylation. Its function is as follows. Involved in oxidative stress-mediated signaling cascade (such as ozone). Involved in the innate immune MAP kinase signaling cascade (MEKK1, MKK4/MKK5 and MPK3/MPK6) downstream of bacterial flagellin receptor FLS2. May be involved in hypersensitive response (HR)-mediated signaling cascade by modulating LIP5 phosphorylation and subsequent multivesicular bodies (MVBs) trafficking. May phosphorylate regulators of WRKY transcription factors. Mediates the phosphorylation of VIP1 and subsequent stress genes transcription in response to Agrobacterium. MKK9-MPK3/MPK6 module phosphorylates and activates EIN3, leading to the promotion of EIN3-mediated transcription in ethylene signaling. MPK3/MPK6 cascade regulates camalexin synthesis through transcriptional regulation of the biosynthetic genes after pathogen infection. YDA-MKK4/MKK5-MPK3/MPK6 module regulates stomatal cell fate before the guard mother cell (GMC) is specified. When activated, reinforces the feedback loop by phosphorylating BASL, and inhibits stomatal fate by phosphorylating SPCH. This MAPK cascade also functions downstream of the ER receptor in regulating coordinated local cell proliferation, which shapes the morphology of plant organs. This Arabidopsis thaliana (Mouse-ear cress) protein is Mitogen-activated protein kinase 3.